Consider the following 239-residue polypeptide: Succinate dehydrogenase [ubiquinone] iron-sulfur subunit (239 aa).

The region spanning 11-100 is the 2Fe-2S ferredoxin-type domain; it reads FKVYRWNPDK…EMKIYPLPHM (90 aa). 4 residues coordinate [2Fe-2S] cluster: C61, C66, C69, and C81. In terms of domain architecture, 4Fe-4S ferredoxin-type spans 141 to 171; it reads DREKLDGLYECVLCACCSTSCPSYWWNSDKY. [4Fe-4S] cluster is bound by residues C151, C154, and C157. A [3Fe-4S] cluster-binding site is contributed by C161. Position 166 (W166) interacts with a ubiquinone. [3Fe-4S] cluster is bound by residues C208 and C214. C218 lines the [4Fe-4S] cluster pocket.

The protein belongs to the succinate dehydrogenase/fumarate reductase iron-sulfur protein family. Component of complex II composed of four subunits: a flavoprotein (FP), an iron-sulfur protein (IP), and a cytochrome b composed of a large and a small subunit. It depends on [2Fe-2S] cluster as a cofactor. Requires [3Fe-4S] cluster as cofactor. [4Fe-4S] cluster serves as cofactor.

It is found in the mitochondrion inner membrane. It catalyses the reaction a quinone + succinate = fumarate + a quinol. The protein operates within carbohydrate metabolism; tricarboxylic acid cycle; fumarate from succinate (eukaryal route): step 1/1. Iron-sulfur protein (IP) subunit of succinate dehydrogenase (SDH) that is involved in complex II of the mitochondrial electron transport chain and is responsible for transferring electrons from succinate to ubiquinone (coenzyme Q). This Reclinomonas americana protein is Succinate dehydrogenase [ubiquinone] iron-sulfur subunit (SDH2).